The sequence spans 118 residues: Large ribosomal subunit protein bL20 (118 aa).

The protein belongs to the bacterial ribosomal protein bL20 family.

Binds directly to 23S ribosomal RNA and is necessary for the in vitro assembly process of the 50S ribosomal subunit. It is not involved in the protein synthesizing functions of that subunit. The polypeptide is Large ribosomal subunit protein bL20 (Pseudomonas aeruginosa (strain LESB58)).